Reading from the N-terminus, the 175-residue chain is Ribosome maturation factor RimM (175 aa).

The 80-residue stretch at 96-175 (EEDFYWRDLI…LIQVNWEPDF (80 aa)) folds into the PRC barrel domain.

It belongs to the RimM family. As to quaternary structure, binds ribosomal protein uS19.

The protein localises to the cytoplasm. In terms of biological role, an accessory protein needed during the final step in the assembly of 30S ribosomal subunit, possibly for assembly of the head region. Essential for efficient processing of 16S rRNA. May be needed both before and after RbfA during the maturation of 16S rRNA. It has affinity for free ribosomal 30S subunits but not for 70S ribosomes. The protein is Ribosome maturation factor RimM of Psychromonas ingrahamii (strain DSM 17664 / CCUG 51855 / 37).